A 565-amino-acid polypeptide reads, in one-letter code: Thiol:disulfide interchange protein DsbD (565 aa).

Positions 1-19 are cleaved as a signal peptide; the sequence is MAQRIFTLILLLCSTSVFA. 2 disulfides stabilise this stretch: cysteine 122–cysteine 128 and cysteine 182–cysteine 304. A run of 7 helical transmembrane segments spans residues 163–183, 208–228, 243–263, 289–309, 323–343, 357–377, and 384–404; these read LPFS…TPCV, LLTF…GLVV, YVLI…FGLF, GVFI…TAPL, WLGG…LMLI, WMEQ…VFLL, and IWGL…AFIT. In terms of domain architecture, Thioredoxin spans 434 to 565; it reads WAFGATHTAQ…FSAHLRDRQP (132 aa). Cysteine 480 and cysteine 483 are oxidised to a cystine.

This sequence belongs to the thioredoxin family. DsbD subfamily.

Its subcellular location is the cell inner membrane. It carries out the reaction [protein]-dithiol + NAD(+) = [protein]-disulfide + NADH + H(+). It catalyses the reaction [protein]-dithiol + NADP(+) = [protein]-disulfide + NADPH + H(+). Its function is as follows. Required to facilitate the formation of correct disulfide bonds in some periplasmic proteins and for the assembly of the periplasmic c-type cytochromes. Acts by transferring electrons from cytoplasmic thioredoxin to the periplasm. This transfer involves a cascade of disulfide bond formation and reduction steps. This Escherichia coli O6:H1 (strain CFT073 / ATCC 700928 / UPEC) protein is Thiol:disulfide interchange protein DsbD.